The sequence spans 143 residues: Large ribosomal subunit protein uL13 (143 aa).

This sequence belongs to the universal ribosomal protein uL13 family. Part of the 50S ribosomal subunit.

Functionally, this protein is one of the early assembly proteins of the 50S ribosomal subunit, although it is not seen to bind rRNA by itself. It is important during the early stages of 50S assembly. The polypeptide is Large ribosomal subunit protein uL13 (Finegoldia magna (strain ATCC 29328 / DSM 20472 / WAL 2508) (Peptostreptococcus magnus)).